We begin with the raw amino-acid sequence, 901 residues long: Protein translocase subunit SecA (901 aa).

ATP-binding positions include Gln87, Gly105–Thr109, and Asp512. Zn(2+)-binding residues include Cys885, Cys887, Cys896, and His897.

Belongs to the SecA family. Monomer and homodimer. Part of the essential Sec protein translocation apparatus which comprises SecA, SecYEG and auxiliary proteins SecDF-YajC and YidC. The cofactor is Zn(2+).

It localises to the cell inner membrane. Its subcellular location is the cytoplasm. The catalysed reaction is ATP + H2O + cellular proteinSide 1 = ADP + phosphate + cellular proteinSide 2.. Part of the Sec protein translocase complex. Interacts with the SecYEG preprotein conducting channel. Has a central role in coupling the hydrolysis of ATP to the transfer of proteins into and across the cell membrane, serving both as a receptor for the preprotein-SecB complex and as an ATP-driven molecular motor driving the stepwise translocation of polypeptide chains across the membrane. The polypeptide is Protein translocase subunit SecA (Salmonella schwarzengrund (strain CVM19633)).